A 210-amino-acid chain; its full sequence is Scoloptoxin SSD558 (210 aa).

Residues 1–23 form the signal peptide; the sequence is MNILLPSTLFVLLMFQIIGSGMG.

In terms of processing, contains 3 disulfide bonds. In terms of tissue distribution, expressed by the venom gland.

It is found in the secreted. The chain is Scoloptoxin SSD558 from Scolopendra dehaani (Thai centipede).